The sequence spans 377 residues: Putative efflux system component YknX (377 aa).

Residues 3-23 (KVWIGIGIAVIVALFVGINIY) form a helical membrane-spanning segment. A coiled-coil region spans residues 95 to 187 (TNEQLSLEKE…RVSDLEVKSE (93 aa)).

This sequence belongs to the membrane fusion protein (MFP) (TC 8.A.1) family. Part of a complex composed of YknX, YknY and YknZ. The complex interacts with YknW.

It localises to the cell membrane. Part of an unusual four-component transporter, which is required for protection against the killing factor SdpC (sporulation-delaying protein). This is Putative efflux system component YknX (yknX) from Bacillus subtilis (strain 168).